We begin with the raw amino-acid sequence, 365 residues long: tRNA 2-selenouridine synthase (365 aa).

The Rhodanese domain maps to 16–138 (FLLKTPLIDL…LRRYLINVID (123 aa)). Cys-98 acts as the S-selanylcysteine intermediate in catalysis.

This sequence belongs to the SelU family. Monomer.

The catalysed reaction is 5-methylaminomethyl-2-thiouridine(34) in tRNA + selenophosphate + (2E)-geranyl diphosphate + H2O + H(+) = 5-methylaminomethyl-2-selenouridine(34) in tRNA + (2E)-thiogeraniol + phosphate + diphosphate. It carries out the reaction 5-methylaminomethyl-2-thiouridine(34) in tRNA + (2E)-geranyl diphosphate = 5-methylaminomethyl-S-(2E)-geranyl-thiouridine(34) in tRNA + diphosphate. The enzyme catalyses 5-methylaminomethyl-S-(2E)-geranyl-thiouridine(34) in tRNA + selenophosphate + H(+) = 5-methylaminomethyl-2-(Se-phospho)selenouridine(34) in tRNA + (2E)-thiogeraniol. It catalyses the reaction 5-methylaminomethyl-2-(Se-phospho)selenouridine(34) in tRNA + H2O = 5-methylaminomethyl-2-selenouridine(34) in tRNA + phosphate. In terms of biological role, involved in the post-transcriptional modification of the uridine at the wobble position (U34) of tRNA(Lys), tRNA(Glu) and tRNA(Gln). Catalyzes the conversion of 2-thiouridine (S2U-RNA) to 2-selenouridine (Se2U-RNA). Acts in a two-step process involving geranylation of 2-thiouridine (S2U) to S-geranyl-2-thiouridine (geS2U) and subsequent selenation of the latter derivative to 2-selenouridine (Se2U) in the tRNA chain. The sequence is that of tRNA 2-selenouridine synthase from Psychromonas ingrahamii (strain DSM 17664 / CCUG 51855 / 37).